The primary structure comprises 1042 residues: MAEENRKDRGVSSTVAIPSGLNRIKTRLASSGPRPEDSSDTVLKPPFNRNQKTIVPRGHGRTTGSSKQERKGTKLSRWLASYKPKYSCHPPKYACSSTTSSEEIKLRGKNSGKDEEKMIKISETNPPCSKSMGIKSFSHELGPRGGVQTPYPRPHSYNDLKELLGSLHSRFDVAKETVDKKLDVFVRDVKEAMEKMDPSCPEDREMAEQLLDVARACMEMTSAQLRATCESIVQDLTRKRKQCQAGLVKWLFSQLLFILTHCTRVVMFQKETEPIDESSFRKFKECLERIPALETDWGSTPRVDDSGSGYPEYQRNEAGQKFKRRDKESLESETALDYVVPNDHGNNAAREGYAAAKQEFPSHEPQFDSKVVEQRFYLSDEYEDKMSNEPGKELGGSDYVICRICEEEVPLFHLEPHSYICAYADKCEINCVDVDERLLKLEEILEQIIDSRSLNSFTQAGGLENSVLRKSGVASEGCSPKINEWRNKGLEGMFEDLHEMDTAFIDESYTYPIHLKSHVGAKFCHHATSSSTGSITSVSSTNTPRTSHFDSYWLERHCPEQEDLRLMMDLSDIARCGASTDFSKEGSCDYIMACMQDIQAVLKQGKLKALVIDTFGGRIEKLLCEKYLHARELTADKSSVGNIKESEDVLEHASATPQLLLKDRISIDDFEIIKPISRGAFGKVFLARKRTTGDFFAIKVLKKLDMIRKNDIERILQERNILITVRYPFLVRFFYSFTCRDNLYLVMEYLNGGDLYSLLQKVGCLDEEIARIYIAELVLALEYLHSLKIVHRDLKPDNLLIAYNGHIKLTDFGLSKIGLINNTIDLSGHESDVSPRTNSHHFQKNQEEERIRHSAVGTPDYLAPEILLGTEHGYAADWWSAGIVLFELLTGIPPFTASRPEKIFDNILNGKMPWPDVPGEMSYEAQDLINRLLVHEPEKRLGANGAAEVKSHPFFQGVDWENLALQKAAFVPQPESINDTSYFVSRFSESSCSDTETGNNSGSNPDSGDEVGIWKLHPFLSRYSICNHRIYRKLFFLLLCVF.

Composition is skewed to basic and acidic residues over residues 1–10 (MAEENRKDRG), 102–115 (EEIK…GKDE), and 314–327 (QRNE…RRDK). Disordered stretches follow at residues 1–75 (MAEE…GTKL), 90–115 (PPKY…GKDE), and 297–327 (WGST…RRDK). Residues 402-421 (CRICEEEVPLFHLEPHSYIC) form a C2H2-type; atypical zinc finger. In terms of domain architecture, Protein kinase spans 670–955 (FEIIKPISRG…AAEVKSHPFF (286 aa)). ATP is bound by residues 676–684 (ISRGAFGKV) and lysine 699. The active-site Proton acceptor is aspartate 793. The disordered stretch occupies residues 830 to 850 (ESDVSPRTNSHHFQKNQEEER). Serine 854 carries the post-translational modification Phosphoserine. The AGC-kinase C-terminal domain occupies 956–1042 (QGVDWENLAL…KLFFLLLCVF (87 aa)).

The protein belongs to the protein kinase superfamily. AGC Ser/Thr protein kinase family.

The catalysed reaction is L-seryl-[protein] + ATP = O-phospho-L-seryl-[protein] + ADP + H(+). The enzyme catalyses L-threonyl-[protein] + ATP = O-phospho-L-threonyl-[protein] + ADP + H(+). The protein is Probable serine/threonine protein kinase IRE4 of Arabidopsis thaliana (Mouse-ear cress).